Reading from the N-terminus, the 434-residue chain is Putative ZDHHC-type palmitoyltransferase 1 (434 aa).

2 helical membrane-spanning segments follow: residues 25-45 (AYFI…LIFV) and 53-73 (ITAA…IFLI). Residues 115-165 (KWCETCCLYRPPRANHCGICNNCVERFDHHCPWVGNCIGRRNYQTFLYFLY) form the DHHC domain. The S-palmitoyl cysteine intermediate role is filled by Cys145. Residues 160-180 (FLYFLYSLGFLCIWIMGFCVA) form a helical membrane-spanning segment. N-linked (GlcNAc...) asparagine glycans are attached at residues Asn207, Asn216, Asn274, Asn346, Asn362, Asn373, Asn381, Asn387, and Asn393. The interval 262 to 330 (TIPTPNNING…ISPPQMLQRQ (69 aa)) is disordered. The segment covering 267–316 (NNINGNNNNSINNNNNNNNNNNNNNNNNNNNNNNNNNINNGNSGGTTNNG) has biased composition (low complexity). Positions 365–434 (TISEDKPKNL…SLNHELQVNV (70 aa)) are disordered. Positions 373 to 387 (NLSNSNNNNNTNNKN) are enriched in low complexity. Over residues 409–419 (DDFKSDNDKEI) the composition is skewed to basic and acidic residues. The N-linked (GlcNAc...) asparagine glycan is linked to Asn420. Positions 420 to 434 (NSSSLSLNHELQVNV) are enriched in polar residues.

This sequence belongs to the DHHC palmitoyltransferase family.

The protein resides in the membrane. The catalysed reaction is L-cysteinyl-[protein] + hexadecanoyl-CoA = S-hexadecanoyl-L-cysteinyl-[protein] + CoA. This Dictyostelium discoideum (Social amoeba) protein is Putative ZDHHC-type palmitoyltransferase 1.